A 375-amino-acid chain; its full sequence is Probable pectin lyase B (375 aa).

Residues 1-19 (MKYAAFLPTIGALVSQAIA) form the signal peptide. 2 cysteine pairs are disulfide-bonded: Cys82–Cys101 and Cys91–Cys225. Asn128 carries an N-linked (GlcNAc...) asparagine glycan. Arg255 is an active-site residue. Cys321 and Cys329 are joined by a disulfide.

Belongs to the polysaccharide lyase 1 family.

It localises to the secreted. It carries out the reaction Eliminative cleavage of (1-&gt;4)-alpha-D-galacturonan methyl ester to give oligosaccharides with 4-deoxy-6-O-methyl-alpha-D-galact-4-enuronosyl groups at their non-reducing ends.. Its function is as follows. Pectinolytic enzymes consist of four classes of enzymes: pectin lyase, polygalacturonase, pectin methylesterase and rhamnogalacturonase. Among pectinolytic enzymes, pectin lyase is the most important in depolymerization of pectin, since it cleaves internal glycosidic bonds of highly methylated pectins. The sequence is that of Probable pectin lyase B (pelB) from Aspergillus fumigatus (strain CBS 144.89 / FGSC A1163 / CEA10) (Neosartorya fumigata).